The following is a 181-amino-acid chain: ADP-ribosylation factor 2-A (181 aa).

Glycine 2 carries the N-myristoyl glycine lipid modification. Residues 24 to 31, 67 to 71, and 126 to 129 contribute to the GTP site; these read GLDAAGKT, DVGGQ, and NKQD.

Belongs to the small GTPase superfamily. Arf family.

The protein localises to the golgi apparatus. Activated by AGD10. Functionally, GTP-binding protein involved in protein trafficking; may modulate vesicle budding and uncoating within the Golgi apparatus. The protein is ADP-ribosylation factor 2-A (ARF2-A) of Arabidopsis thaliana (Mouse-ear cress).